The sequence spans 301 residues: Glucose-1-phosphate adenylyltransferase large subunit (301 aa).

This sequence belongs to the bacterial/plant glucose-1-phosphate adenylyltransferase family. As to quaternary structure, heterotetramer.

The protein localises to the plastid. It localises to the chloroplast. The protein resides in the amyloplast. It carries out the reaction alpha-D-glucose 1-phosphate + ATP + H(+) = ADP-alpha-D-glucose + diphosphate. It functions in the pathway glycan biosynthesis; starch biosynthesis. Its activity is regulated as follows. Insensitive to 3'phosphoglycerate and orthophosphate. Its function is as follows. This protein plays a role in synthesis of starch. It catalyzes the synthesis of the activated glycosyl donor, ADP-glucose from Glc-1-P and ATP. The chain is Glucose-1-phosphate adenylyltransferase large subunit (AGA.1) from Triticum aestivum (Wheat).